Consider the following 112-residue polypeptide: Nitrogen regulatory protein P-II 1 (112 aa).

An O-UMP-tyrosine modification is found at Tyr51.

The protein belongs to the P(II) protein family. As to quaternary structure, homotrimer. In terms of processing, uridylylated/deuridylylated by GlnD.

In terms of biological role, P-II indirectly controls the transcription of the glutamine synthetase gene (GlnA). P-II prevents NR-II-catalyzed conversion of NR-I to NR-I-phosphate, the transcriptional activator of GlnA. When P-II is uridylylated to P-II-UMP, these events are reversed. When the ratio of Gln to 2-ketoglutarate decreases, P-II is uridylylated to P-II-UMP, which causes the deadenylation of glutamine synthetase by GlnE, so activating the enzyme. The protein is Nitrogen regulatory protein P-II 1 (glnB) of Escherichia coli O157:H7.